The following is a 438-amino-acid chain: Chaperone SurA (438 aa).

Positions 1-28 (MKTMNPYIRHLILLICCLGGMLAQPLSA) are cleaved as a signal peptide. 2 consecutive PpiC domains span residues 181-282 (EEEY…KLVS) and 292-390 (VQQT…QVLE).

Its subcellular location is the periplasm. The catalysed reaction is [protein]-peptidylproline (omega=180) = [protein]-peptidylproline (omega=0). Its function is as follows. Chaperone involved in the correct folding and assembly of outer membrane proteins. Recognizes specific patterns of aromatic residues and the orientation of their side chains, which are found more frequently in integral outer membrane proteins. May act in both early periplasmic and late outer membrane-associated steps of protein maturation. This Dechloromonas aromatica (strain RCB) protein is Chaperone SurA.